Here is a 592-residue protein sequence, read N- to C-terminus: Calnexin (592 aa).

The N-terminal stretch at 1-20 is a signal peptide; it reads MEGKWLLCMLLVLGTAIVEA. Topologically, residues 21–481 are lumenal; the sequence is HDGHDDDVID…QMIEAAEERP (461 aa). Residues Ser-74 and Asp-117 each coordinate Ca(2+). Lys-137 bears the N6-acetyllysine mark. The cysteines at positions 160 and 194 are disulfide-linked. Residues Tyr-164, Lys-166, Tyr-185, and Asp-192 each contribute to the an alpha-D-glucoside site. Residues 260–345 form a disordered region; the sequence is GNLLNDMTPP…AEKPEDWDED (86 aa). Basic and acidic residues predominate over residues 274-319; sequence REIEDPEDRKPEDWDERPKIPDPEAVKPDDWDEDAPAKIPDEEATK. The p domain (Extended arm) stretch occupies residues 276-409; that stretch reads IEDPEDRKPE…RKIPNPDFFE (134 aa). Repeat copies occupy residues 278–290, 295–307, 314–326, 333–345, and 348–358. 2 4 X approximate repeats regions span residues 278–345 and 348–405; these read DPED…WDED and GEWE…IPNP. The span at 323–345 shows a compositional bias: acidic residues; it reads WLDDEPEYVPDPDAEKPEDWDED. Positions 326–359 are interaction with PPIB; the sequence is DEPEYVPDPDAEKPEDWDEDMDGEWEAPQIANPK. Cys-360 and Cys-366 form a disulfide bridge. 3 consecutive repeat copies span residues 367 to 377, 381 to 391, and 395 to 405. Glu-425 serves as a coordination point for an alpha-D-glucoside. Asp-436 lines the Ca(2+) pocket. A helical membrane pass occupies residues 482 to 502; the sequence is WLWVVYILTVALPVFLVILFC. Residues Cys-502 and Cys-503 are each lipidated (S-palmitoyl cysteine). Residues 503 to 592 are Cytoplasmic-facing; sequence CSGKKQTSAM…SPRNRKPRRE (90 aa). A sufficient to mediate interaction with SGIP1 region spans residues 503–592; the sequence is CSGKKQTSAM…SPRNRKPRRE (90 aa). Positions 511–592 are disordered; that stretch reads AMEYKKTDAP…SPRNRKPRRE (82 aa). Residues 525–547 are compositionally biased toward acidic residues; sequence KEEEEEKEEEKDKGDEEEEGEEK. A Phosphoserine modification is found at Ser-554. Residue Thr-562 is modified to Phosphothreonine. Residue Ser-564 is modified to Phosphoserine; by MAPK3. Position 583 is a phosphoserine (Ser-583).

This sequence belongs to the calreticulin family. Interacts with MAPK3/ERK1. Interacts with KCNH2. Associates with ribosomes. Interacts with SGIP1; involved in negative regulation of endocytosis. The palmitoylated form interacts with the ribosome-translocon complex component SSR1, promoting efficient folding of glycoproteins. Interacts with SERPINA2P/SERPINA2 and with the S and Z variants of SERPINA1. Interacts with PPIB. Interacts with ZNRF4. Interacts with SMIM22. Interacts with TMX2. Interacts with TMEM35A/NACHO and CHRNA7. Interacts with reticulophagy regulators RETREG2 and RETREG3. Interacts with DNM1L; may form part of a larger protein complex at the ER-mitochondrial interface during mitochondrial fission. Interacts with ADAM7. Post-translationally, phosphorylated at Ser-564 by MAPK3/ERK1. Phosphorylation by MAPK3/ERK1 increases its association with ribosomes. In terms of processing, palmitoylation by DHHC6 leads to the preferential localization to the perinuclear rough ER. It mediates the association of calnexin with the ribosome-translocon complex (RTC) which is required for efficient folding of glycosylated proteins. Ubiquitinated, leading to proteasomal degradation. Probably ubiquitinated by ZNRF4.

It is found in the endoplasmic reticulum membrane. Its subcellular location is the mitochondrion membrane. It localises to the melanosome membrane. Functionally, calcium-binding protein that interacts with newly synthesized monoglucosylated glycoproteins in the endoplasmic reticulum. It may act in assisting protein assembly and/or in the retention within the ER of unassembled protein subunits. It seems to play a major role in the quality control apparatus of the ER by the retention of incorrectly folded proteins. Associated with partial T-cell antigen receptor complexes that escape the ER of immature thymocytes, it may function as a signaling complex regulating thymocyte maturation. Additionally it may play a role in receptor-mediated endocytosis at the synapse. The protein is Calnexin (CANX) of Pongo abelii (Sumatran orangutan).